The sequence spans 418 residues: tRNA(Met) cytidine acetate ligase (418 aa).

Residues G95, N161, and R186 each contribute to the ATP site.

It belongs to the TmcAL family.

It is found in the cytoplasm. The enzyme catalyses cytidine(34) in elongator tRNA(Met) + acetate + ATP = N(4)-acetylcytidine(34) in elongator tRNA(Met) + AMP + diphosphate. Catalyzes the formation of N(4)-acetylcytidine (ac(4)C) at the wobble position of elongator tRNA(Met), using acetate and ATP as substrates. First activates an acetate ion to form acetyladenylate (Ac-AMP) and then transfers the acetyl group to tRNA to form ac(4)C34. In Thermotoga petrophila (strain ATCC BAA-488 / DSM 13995 / JCM 10881 / RKU-1), this protein is tRNA(Met) cytidine acetate ligase.